The sequence spans 490 residues: MESMTMIILQSLIIFITILFFKKQKRGKKSNTPRSPPRLPLIGNLHQLGHHPHRSLCSLSHRYGPLMLLHLGRVPVLVVSSADVARDILKTHDRVFASRPRSKLFEKLFYDGRDVAFAPYGEYWRQIKSVCVLRLLSNKMVTSFRNVRQEEISLMMEKIQKSSSLQVNVSELLGSLTNDVISRIALGRKYSGETDSKELMKRLMMLMGEFSVGTYVPWLGWIDWISGLDGQLNKTGNDLDEFLEKVVQDHVDGDGQRTDFVDVLLRIQREKSIGFEIDRLCIKAIVLDVLVAGTDSSYALMDWAMTELLRHPECLRTLQEEVRTICKGNLSVSEEDIQNMSYLKAVIKETTRLHPPLPLLAPHESIQDVILGDYHIPAGTQVMINAWAIGREAATWGPDAEKFRPERHLDSSVDFRGHNFELVPFGAGRRICPAISFAVVLIEVALANFVHRYDWKLPEDSKENQTNVAESTGMVIHRLFPLYAIASSTT.

Residues 1–21 form a helical membrane-spanning segment; sequence MESMTMIILQSLIIFITILFF. C432 is a heme binding site.

The protein belongs to the cytochrome P450 family. Heme is required as a cofactor.

It localises to the membrane. This Arabidopsis thaliana (Mouse-ear cress) protein is Cytochrome P450 71A21 (CYP71A21).